The chain runs to 466 residues: Delta-1 crystallin (466 aa).

At A2 the chain carries Blocked amino end (Ala).

The protein belongs to the lyase 1 family. Argininosuccinate lyase subfamily. Homotetramer. Post-translationally, the N-terminus is blocked. Eye lens.

Delta crystallin, the principal crystallin in embryonic lens, is found only in birds and reptiles. The protein is Delta-1 crystallin (ASL1) of Gallus gallus (Chicken).